A 510-amino-acid chain; its full sequence is Histidine ammonia-lyase (510 aa).

Residues 143-145 constitute a cross-link (5-imidazolinone (Ala-Gly)); that stretch reads ASG. S144 is modified (2,3-didehydroalanine (Ser)).

It belongs to the PAL/histidase family. Post-translationally, contains an active site 4-methylidene-imidazol-5-one (MIO), which is formed autocatalytically by cyclization and dehydration of residues Ala-Ser-Gly.

It is found in the cytoplasm. The catalysed reaction is L-histidine = trans-urocanate + NH4(+). The protein operates within amino-acid degradation; L-histidine degradation into L-glutamate; N-formimidoyl-L-glutamate from L-histidine: step 1/3. The protein is Histidine ammonia-lyase of Shewanella woodyi (strain ATCC 51908 / MS32).